The chain runs to 503 residues: Glutamate/gamma-aminobutyrate antiporter (503 aa).

Residue 33-43 coordinates L-glutamate; that stretch reads LHLVFFLLLGG. The next 7 membrane-spanning stretches (helical) occupy residues 35–55, 153–173, 194–214, 232–252, 366–386, 407–427, and 440–460; these read LVFF…LCAA, FVVG…AYFI, VSTL…EASA, ILLV…VAAV, LTVV…FVLI, IIAG…FVPP, and MILL…YELH.

The protein belongs to the amino acid-polyamine-organocation (APC) superfamily. Glutamate:GABA antiporter (GGA) (TC 2.A.3.7) family.

The protein localises to the cell membrane. The catalysed reaction is 4-aminobutanoate(in) + L-glutamate(out) = 4-aminobutanoate(out) + L-glutamate(in). In terms of biological role, involved in glutaminase-dependent acid resistance. Exchanges extracellular glutamate (Glu) for intracellular gamma-aminobutyric acid (GABA) under acidic conditions. The protein is Glutamate/gamma-aminobutyrate antiporter (gadC) of Lactococcus lactis subsp. lactis (strain IL1403) (Streptococcus lactis).